We begin with the raw amino-acid sequence, 164 residues long: Phosphopantetheine adenylyltransferase (164 aa).

Residue Thr14 participates in substrate binding. Residues 14–15 and His22 contribute to the ATP site; that span reads TF. Substrate-binding residues include Lys46, Leu78, and Arg92. ATP is bound by residues 93–95, Glu103, and 128–134; these read GLR and HAFISST.

This sequence belongs to the bacterial CoaD family. Homohexamer. It depends on Mg(2+) as a cofactor.

Its subcellular location is the cytoplasm. It catalyses the reaction (R)-4'-phosphopantetheine + ATP + H(+) = 3'-dephospho-CoA + diphosphate. It participates in cofactor biosynthesis; coenzyme A biosynthesis; CoA from (R)-pantothenate: step 4/5. In terms of biological role, reversibly transfers an adenylyl group from ATP to 4'-phosphopantetheine, yielding dephospho-CoA (dPCoA) and pyrophosphate. The sequence is that of Phosphopantetheine adenylyltransferase from Vibrio cholerae serotype O1 (strain ATCC 39541 / Classical Ogawa 395 / O395).